We begin with the raw amino-acid sequence, 183 residues long: Small ribosomal subunit protein uS4c (183 aa).

In terms of domain architecture, S4 RNA-binding spans 82–143 (MRLDNILFRL…KQRSKALIQN (62 aa)).

It belongs to the universal ribosomal protein uS4 family. Part of the 30S ribosomal subunit. Contacts protein S5. The interaction surface between S4 and S5 is involved in control of translational fidelity.

It localises to the plastid. Its subcellular location is the chloroplast. Functionally, one of the primary rRNA binding proteins, it binds directly to 16S rRNA where it nucleates assembly of the body of the 30S subunit. In terms of biological role, with S5 and S12 plays an important role in translational accuracy. This chain is Small ribosomal subunit protein uS4c (rps4), found in Gladiolus communis (Cornflag).